Reading from the N-terminus, the 120-residue chain is Spermidine export protein MdtJ (120 aa).

4 helical membrane passes run 1–21 (MFYW…TLSM), 31–51 (TGFI…AFAV), 54–74 (IALG…ITLF), and 81–101 (ESLS…IVLI).

Belongs to the drug/metabolite transporter (DMT) superfamily. Small multidrug resistance (SMR) (TC 2.A.7.1) family. MdtJ subfamily. In terms of assembly, forms a complex with MdtI.

It is found in the cell inner membrane. Functionally, catalyzes the excretion of spermidine. The polypeptide is Spermidine export protein MdtJ (Klebsiella pneumoniae subsp. pneumoniae (strain ATCC 700721 / MGH 78578)).